Here is a 187-residue protein sequence, read N- to C-terminus: Prepilin peptidase-dependent protein B (187 aa).

The propeptide at 1-7 (MPVKEQG) is leader sequence. N-methylphenylalanine is present on Phe8. Residues 8 to 28 (FSLLEVLIAMAISSVLLLGAA) form a helical membrane-spanning segment.

It localises to the membrane. In terms of biological role, not yet known. This chain is Prepilin peptidase-dependent protein B (ppdB), found in Escherichia coli (strain K12).